We begin with the raw amino-acid sequence, 56 residues long: MAVPKKRTSKSKKKTRKAVWTAKADKAAVEAFSRARSVLTGRSSSFYYAANNDISK.

This sequence belongs to the bacterial ribosomal protein bL32 family.

The protein localises to the plastid. It localises to the chloroplast. This chain is Large ribosomal subunit protein bL32c, found in Huperzia lucidula (Shining clubmoss).